The following is a 377-amino-acid chain: Glutamate 5-kinase (377 aa).

Lys-17 is an ATP binding site. The substrate site is built by Ser-56, Asp-143, and Asn-155. Residue 217–223 (SGGMFSK) coordinates ATP. One can recognise a PUA domain in the interval 282-360 (AGDLVIDDGA…CEIESILGKC (79 aa)).

This sequence belongs to the glutamate 5-kinase family.

The protein resides in the cytoplasm. It carries out the reaction L-glutamate + ATP = L-glutamyl 5-phosphate + ADP. It participates in amino-acid biosynthesis; L-proline biosynthesis; L-glutamate 5-semialdehyde from L-glutamate: step 1/2. In terms of biological role, catalyzes the transfer of a phosphate group to glutamate to form L-glutamate 5-phosphate. This chain is Glutamate 5-kinase, found in Maridesulfovibrio salexigens (strain ATCC 14822 / DSM 2638 / NCIMB 8403 / VKM B-1763) (Desulfovibrio salexigens).